Consider the following 340-residue polypeptide: Guanine nucleotide-binding protein G(I)/G(S)/G(T) subunit beta-1 (340 aa).

7 WD repeats span residues 53-83 (GHLA…IVWD), 95-125 (LRSS…SIYS), 141-170 (GHTG…ALWD), 182-212 (GHTG…KLWD), 224-254 (GHES…RLFD), 268-298 (NIIC…NVWD), and 310-340 (GHDN…KIWN).

The protein belongs to the WD repeat G protein beta family. As to quaternary structure, g proteins are composed of 3 units, alpha, beta and gamma.

Its function is as follows. Guanine nucleotide-binding proteins (G proteins) are involved as a modulator or transducer in various transmembrane signaling systems. The beta and gamma chains are required for the GTPase activity, for replacement of GDP by GTP, and for G protein-effector interaction. The polypeptide is Guanine nucleotide-binding protein G(I)/G(S)/G(T) subunit beta-1 (GBETA1) (Homarus americanus (American lobster)).